A 513-amino-acid chain; its full sequence is Histidine ammonia-lyase (513 aa).

Residues 142–144 (ASG) constitute a cross-link (5-imidazolinone (Ala-Gly)). A 2,3-didehydroalanine (Ser) modification is found at S143.

Belongs to the PAL/histidase family. In terms of processing, contains an active site 4-methylidene-imidazol-5-one (MIO), which is formed autocatalytically by cyclization and dehydration of residues Ala-Ser-Gly.

It localises to the cytoplasm. The catalysed reaction is L-histidine = trans-urocanate + NH4(+). Its pathway is amino-acid degradation; L-histidine degradation into L-glutamate; N-formimidoyl-L-glutamate from L-histidine: step 1/3. This Hyphomonas neptunium (strain ATCC 15444) protein is Histidine ammonia-lyase.